We begin with the raw amino-acid sequence, 491 residues long: Probable folate-biopterin transporter 4 (491 aa).

6 helical membrane-spanning segments follow: residues 14 to 34 (VAFLWLVCLIYFTQGFRSFVW), 52 to 72 (SQFVFSVAFFPWSIKPLYGII), 84 to 104 (TPYLVISTVLSLVPWLVLGLD), 112 to 132 (LYLMIFLTVQNLGSAMADVVI), 154 to 174 (VSWFAMAVGGVCGSLLGGYAL), and 179 to 199 (IETIFLLFTVLPALQLLSCAL). The interval 222-262 (KSLTSNDNYPDTSKSNTRRRKGQKKGKKGDSNGKSETQKKQ) is disordered. Residues 224-236 (LTSNDNYPDTSKS) show a composition bias toward polar residues. A compositionally biased stretch (basic residues) spans 237 to 248 (NTRRRKGQKKGK). Over residues 249 to 260 (KGDSNGKSETQK) the composition is skewed to basic and acidic residues. A run of 6 helical transmembrane segments spans residues 294–314 (MAWFFIAHITVPNLSTVMFYY), 323–343 (AAFLGTARVVGWLGLMFGTFI), 356–376 (SLLFAHIGLSVTILLDMVLVS), 389–411 (MVLFGSALGDAINQLKFMPFLIL), 437–457 (TVGSFMGAGLASLLGISSGSF), and 461–481 (FMGLAIQVFCTYIPVLFLFLI).

Belongs to the major facilitator superfamily. Folate-biopterin transporter (TC 2.A.71) family.

The protein resides in the membrane. Functionally, could mediate folate transport. The sequence is that of Probable folate-biopterin transporter 4 from Arabidopsis thaliana (Mouse-ear cress).